Here is a 341-residue protein sequence, read N- to C-terminus: GTP-binding protein REM 2 (341 aa).

Acidic residues predominate over residues 1 to 13 (MHTDLDTDMDADT). 2 disordered regions span residues 1 to 72 (MHTD…SMPV) and 84 to 106 (VDELDWPPQASSSGSSDSLGSGE). Polar residues predominate over residues 18 to 32 (LCSSSSRQASPSGTP). S27 bears the Phosphoserine mark. Basic and acidic residues predominate over residues 43–54 (QKPEKLLAELDR). A compositionally biased stretch (low complexity) spans 94–105 (SSSGSSDSLGSG). GTP-binding positions include 122–129 (GESGVGKS), 230–233 (NKSD), and 261–262 (AA). The disordered stretch occupies residues 282 to 309 (RGRGHAGGQRPEPSSPDGPAPPTRRESL). The segment covering 294-303 (PSSPDGPAPP) has biased composition (pro residues). Position 296 is a phosphoserine (S296).

Belongs to the small GTPase superfamily. RGK family. Expressed in brain and kidney.

Its subcellular location is the cell membrane. Its function is as follows. Binds GTP saturably and exhibits a low intrinsic rate of GTP hydrolysis. This is GTP-binding protein REM 2 (Rem2) from Rattus norvegicus (Rat).